Consider the following 126-residue polypeptide: Ribosome-binding factor A (126 aa).

It belongs to the RbfA family. Monomer. Binds 30S ribosomal subunits, but not 50S ribosomal subunits or 70S ribosomes.

It localises to the cytoplasm. Functionally, one of several proteins that assist in the late maturation steps of the functional core of the 30S ribosomal subunit. Associates with free 30S ribosomal subunits (but not with 30S subunits that are part of 70S ribosomes or polysomes). Required for efficient processing of 16S rRNA. May interact with the 5'-terminal helix region of 16S rRNA. The polypeptide is Ribosome-binding factor A (Thermosynechococcus vestitus (strain NIES-2133 / IAM M-273 / BP-1)).